Consider the following 210-residue polypeptide: Histidine biosynthesis bifunctional protein HisIE (210 aa).

Positions methionine 1 to serine 106 are phosphoribosyl-AMP cyclohydrolase. The tract at residues valine 107 to tryptophan 210 is phosphoribosyl-ATP pyrophosphohydrolase.

In the N-terminal section; belongs to the PRA-CH family. The protein in the C-terminal section; belongs to the PRA-PH family.

Its subcellular location is the cytoplasm. It catalyses the reaction 1-(5-phospho-beta-D-ribosyl)-ATP + H2O = 1-(5-phospho-beta-D-ribosyl)-5'-AMP + diphosphate + H(+). It carries out the reaction 1-(5-phospho-beta-D-ribosyl)-5'-AMP + H2O = 1-(5-phospho-beta-D-ribosyl)-5-[(5-phospho-beta-D-ribosylamino)methylideneamino]imidazole-4-carboxamide. Its pathway is amino-acid biosynthesis; L-histidine biosynthesis; L-histidine from 5-phospho-alpha-D-ribose 1-diphosphate: step 2/9. It participates in amino-acid biosynthesis; L-histidine biosynthesis; L-histidine from 5-phospho-alpha-D-ribose 1-diphosphate: step 3/9. This is Histidine biosynthesis bifunctional protein HisIE (hisI) from Staphylococcus aureus (strain Mu50 / ATCC 700699).